A 994-amino-acid chain; its full sequence is Probable beta-galactosidase C (994 aa).

A signal peptide spans Met-1–Ala-19. Position 78 (Tyr-78) interacts with substrate. N-linked (GlcNAc...) asparagine glycosylation is present at Asn-88. Substrate-binding residues include Asn-123, Ala-124, Glu-125, and Asn-183. Residue Glu-184 is the Proton donor of the active site. Tyr-247 contributes to the substrate binding site. Cysteines 253 and 301 form a disulfide. Residue Asn-272 is glycosylated (N-linked (GlcNAc...) asparagine). The active-site Nucleophile is Glu-283. Tyr-350 contacts substrate. Asn-388, Asn-407, Asn-433, Asn-500, Asn-514, Asn-521, Asn-584, Asn-600, Asn-674, Asn-712, Asn-717, Asn-757, Asn-861, and Asn-969 each carry an N-linked (GlcNAc...) asparagine glycan.

The protein belongs to the glycosyl hydrolase 35 family.

It is found in the secreted. It catalyses the reaction Hydrolysis of terminal non-reducing beta-D-galactose residues in beta-D-galactosides.. In terms of biological role, cleaves beta-linked terminal galactosyl residues from gangliosides, glycoproteins, and glycosaminoglycans. In Aspergillus niger (strain ATCC MYA-4892 / CBS 513.88 / FGSC A1513), this protein is Probable beta-galactosidase C (lacC).